Reading from the N-terminus, the 372-residue chain is DNA replication and repair protein RecF (372 aa).

Residue 30–37 (GDNGQGKT) participates in ATP binding.

Belongs to the RecF family.

It localises to the cytoplasm. Functionally, the RecF protein is involved in DNA metabolism; it is required for DNA replication and normal SOS inducibility. RecF binds preferentially to single-stranded, linear DNA. It also seems to bind ATP. The chain is DNA replication and repair protein RecF from Ruminiclostridium cellulolyticum (strain ATCC 35319 / DSM 5812 / JCM 6584 / H10) (Clostridium cellulolyticum).